The sequence spans 462 residues: Integrator complex subunit 12 (462 aa).

Residues glycine 42 to proline 129 form a disordered region. A compositionally biased stretch (polar residues) spans isoleucine 59–valine 86. Lysine 68 is covalently cross-linked (Glycyl lysine isopeptide (Lys-Gly) (interchain with G-Cter in SUMO2)). The segment covering threonine 88–glutamate 124 has biased composition (basic and acidic residues). Serine 128 is subject to Phosphoserine. Residues glycine 159–glutamine 215 form a PHD-type zinc finger. A Glycyl lysine isopeptide (Lys-Gly) (interchain with G-Cter in SUMO2) cross-link involves residue lysine 254. Residues serine 301–glutamine 328 are compositionally biased toward polar residues. The interval serine 301–lysine 462 is disordered. Low complexity-rich tracts occupy residues lysine 347 to valine 358 and glycine 396 to serine 437. Residues glutamine 449 to lysine 462 show a composition bias toward basic residues.

This sequence belongs to the Integrator subunit 12 family. As to quaternary structure, component of the Integrator complex, composed of core subunits INTS1, INTS2, INTS3, INTS4, INTS5, INTS6, INTS7, INTS8, INTS9/RC74, INTS10, INTS11/CPSF3L, INTS12, INTS13, INTS14 and INTS15. The core complex associates with protein phosphatase 2A subunits PPP2CA and PPP2R1A, to form the Integrator-PP2A (INTAC) complex. Post-translationally, dephosphorylated at Ser-128 by the PNUTS-PP1 complex, promoting RNA polymerase II transcription pause-release.

It is found in the nucleus. Its function is as follows. Component of the integrator complex, a multiprotein complex that terminates RNA polymerase II (Pol II) transcription in the promoter-proximal region of genes. The integrator complex provides a quality checkpoint during transcription elongation by driving premature transcription termination of transcripts that are unfavorably configured for transcriptional elongation: the complex terminates transcription by (1) catalyzing dephosphorylation of the C-terminal domain (CTD) of Pol II subunit POLR2A/RPB1 and SUPT5H/SPT5, (2) degrading the exiting nascent RNA transcript via endonuclease activity and (3) promoting the release of Pol II from bound DNA. The integrator complex is also involved in terminating the synthesis of non-coding Pol II transcripts, such as enhancer RNAs (eRNAs), small nuclear RNAs (snRNAs), telomerase RNAs and long non-coding RNAs (lncRNAs). Mediates recruitment of cytoplasmic dynein to the nuclear envelope, probably as component of the integrator complex. The protein is Integrator complex subunit 12 (INTS12) of Macaca fascicularis (Crab-eating macaque).